We begin with the raw amino-acid sequence, 262 residues long: Phosphatidylserine decarboxylase proenzyme (262 aa).

Active-site charge relay system; for autoendoproteolytic cleavage activity residues include aspartate 86, histidine 142, and serine 226. The active-site Schiff-base intermediate with substrate; via pyruvic acid; for decarboxylase activity is serine 226. The residue at position 226 (serine 226) is a Pyruvic acid (Ser); by autocatalysis.

Belongs to the phosphatidylserine decarboxylase family. PSD-B subfamily. Prokaryotic type I sub-subfamily. In terms of assembly, heterodimer of a large membrane-associated beta subunit and a small pyruvoyl-containing alpha subunit. Requires pyruvate as cofactor. In terms of processing, is synthesized initially as an inactive proenzyme. Formation of the active enzyme involves a self-maturation process in which the active site pyruvoyl group is generated from an internal serine residue via an autocatalytic post-translational modification. Two non-identical subunits are generated from the proenzyme in this reaction, and the pyruvate is formed at the N-terminus of the alpha chain, which is derived from the carboxyl end of the proenzyme. The autoendoproteolytic cleavage occurs by a canonical serine protease mechanism, in which the side chain hydroxyl group of the serine supplies its oxygen atom to form the C-terminus of the beta chain, while the remainder of the serine residue undergoes an oxidative deamination to produce ammonia and the pyruvoyl prosthetic group on the alpha chain. During this reaction, the Ser that is part of the protease active site of the proenzyme becomes the pyruvoyl prosthetic group, which constitutes an essential element of the active site of the mature decarboxylase.

It localises to the cell membrane. The enzyme catalyses a 1,2-diacyl-sn-glycero-3-phospho-L-serine + H(+) = a 1,2-diacyl-sn-glycero-3-phosphoethanolamine + CO2. Its pathway is phospholipid metabolism; phosphatidylethanolamine biosynthesis; phosphatidylethanolamine from CDP-diacylglycerol: step 2/2. Functionally, catalyzes the formation of phosphatidylethanolamine (PtdEtn) from phosphatidylserine (PtdSer). The chain is Phosphatidylserine decarboxylase proenzyme from Bacillus cereus (strain B4264).